Here is a 210-residue protein sequence, read N- to C-terminus: Fimbriae Z protein (210 aa).

Positions 5–121 (SVIIMDEHPI…DIYNAVKMIL (117 aa)) constitute a Response regulatory domain. Residue aspartate 56 is modified to 4-aspartylphosphate. The 66-residue stretch at 143–208 (GGHHDMPLSN…ELIDYAKSHE (66 aa)) folds into the HTH luxR-type domain. A DNA-binding region (H-T-H motif) is located at residues 167–186 (NKEIAEQLLLSNKTISAHKA).

Its subcellular location is the cytoplasm. The sequence is that of Fimbriae Z protein (fimZ) from Salmonella typhimurium (strain LT2 / SGSC1412 / ATCC 700720).